Here is a 144-residue protein sequence, read N- to C-terminus: Large ribosomal subunit protein uL15 (144 aa).

Residues Met-1–Val-44 form a disordered region. Positions Thr-23–Gln-35 are enriched in gly residues.

This sequence belongs to the universal ribosomal protein uL15 family. As to quaternary structure, part of the 50S ribosomal subunit.

Functionally, binds to the 23S rRNA. The chain is Large ribosomal subunit protein uL15 from Leuconostoc mesenteroides subsp. mesenteroides (strain ATCC 8293 / DSM 20343 / BCRC 11652 / CCM 1803 / JCM 6124 / NCDO 523 / NBRC 100496 / NCIMB 8023 / NCTC 12954 / NRRL B-1118 / 37Y).